Reading from the N-terminus, the 512-residue chain is 2,3-bisphosphoglycerate-independent phosphoglycerate mutase (512 aa).

The Mn(2+) site is built by Asp12 and Ser62. Ser62 functions as the Phosphoserine intermediate in the catalytic mechanism. Substrate contacts are provided by residues His123, 154 to 155, Arg181, Arg187, 253 to 256, and Lys336; these read RD and RPDR. Mn(2+)-binding residues include Asp403, His407, Asp444, His445, and His462.

This sequence belongs to the BPG-independent phosphoglycerate mutase family. In terms of assembly, monomer. Requires Mn(2+) as cofactor.

It carries out the reaction (2R)-2-phosphoglycerate = (2R)-3-phosphoglycerate. The protein operates within carbohydrate degradation; glycolysis; pyruvate from D-glyceraldehyde 3-phosphate: step 3/5. In terms of biological role, catalyzes the interconversion of 2-phosphoglycerate and 3-phosphoglycerate. This chain is 2,3-bisphosphoglycerate-independent phosphoglycerate mutase, found in Aster yellows witches'-broom phytoplasma (strain AYWB).